The following is a 331-amino-acid chain: ADP-L-glycero-D-manno-heptose-6-epimerase (331 aa).

Residues 11–12 (FI), 32–33 (DN), lysine 39, lysine 54, 75–79 (LGACT), and asparagine 92 contribute to the NADP(+) site. The active-site Proton acceptor is the tyrosine 139. Lysine 143 is a binding site for NADP(+). Residue asparagine 168 coordinates substrate. Valine 169 and lysine 177 together coordinate NADP(+). The Proton acceptor role is filled by lysine 177. Substrate is bound by residues arginine 179, glutamine 186, 200–203 (FGEH), histidine 213, and tyrosine 292.

It belongs to the NAD(P)-dependent epimerase/dehydratase family. HldD subfamily. As to quaternary structure, homopentamer. It depends on NADP(+) as a cofactor.

It carries out the reaction ADP-D-glycero-beta-D-manno-heptose = ADP-L-glycero-beta-D-manno-heptose. It participates in nucleotide-sugar biosynthesis; ADP-L-glycero-beta-D-manno-heptose biosynthesis; ADP-L-glycero-beta-D-manno-heptose from D-glycero-beta-D-manno-heptose 7-phosphate: step 4/4. In terms of biological role, catalyzes the interconversion between ADP-D-glycero-beta-D-manno-heptose and ADP-L-glycero-beta-D-manno-heptose via an epimerization at carbon 6 of the heptose. This is ADP-L-glycero-D-manno-heptose-6-epimerase from Cupriavidus pinatubonensis (strain JMP 134 / LMG 1197) (Cupriavidus necator (strain JMP 134)).